The chain runs to 247 residues: ATP synthase subunit a, chloroplastic (247 aa).

5 consecutive transmembrane segments (helical) span residues 38-58, 95-115, 134-154, 199-219, and 220-240; these read QVLI…TIAV, VPFI…GALL, INTT…AGLT, LVVV…VMLL, and GLFT…AYIG.

It belongs to the ATPase A chain family. F-type ATPases have 2 components, CF(1) - the catalytic core - and CF(0) - the membrane proton channel. CF(1) has five subunits: alpha(3), beta(3), gamma(1), delta(1), epsilon(1). CF(0) has four main subunits: a, b, b' and c.

It is found in the plastid. The protein resides in the chloroplast thylakoid membrane. In terms of biological role, key component of the proton channel; it plays a direct role in the translocation of protons across the membrane. This Nicotiana sylvestris (Wood tobacco) protein is ATP synthase subunit a, chloroplastic.